We begin with the raw amino-acid sequence, 185 residues long: Ribosome-recycling factor (185 aa).

Belongs to the RRF family.

It localises to the cytoplasm. In terms of biological role, responsible for the release of ribosomes from messenger RNA at the termination of protein biosynthesis. May increase the efficiency of translation by recycling ribosomes from one round of translation to another. The chain is Ribosome-recycling factor from Streptococcus uberis (strain ATCC BAA-854 / 0140J).